Consider the following 234-residue polypeptide: Large ribosomal subunit protein uL1 (234 aa).

Belongs to the universal ribosomal protein uL1 family. As to quaternary structure, part of the 50S ribosomal subunit.

In terms of biological role, binds directly to 23S rRNA. The L1 stalk is quite mobile in the ribosome, and is involved in E site tRNA release. Its function is as follows. Protein L1 is also a translational repressor protein, it controls the translation of the L11 operon by binding to its mRNA. This chain is Large ribosomal subunit protein uL1, found in Yersinia pseudotuberculosis serotype O:1b (strain IP 31758).